We begin with the raw amino-acid sequence, 190 residues long: (S)-2-hydroxypropylphosphonic acid epoxidase (190 aa).

Residues 10–60 enclose the HTH cro/C1-type domain; sequence KAHLEALLATRKMTLEHLQDVRHDATQVYFDGLEHLQNVAQYLAIPLSEFF. The segment at residues 20–40 is a DNA-binding region (H-T-H motif); sequence RKMTLEHLQDVRHDATQVYFD. Residues R87, Y95, 125-128, and E132 each bind substrate; that span reads NGGH. Residues H128, E132, and H171 each contribute to the Fe cation site. One can recognise a Cupin type-2 domain in the interval 128–176; it reads HGSREIVYVTRGAVRVRWVGDNDELKEDVLNEGDSIFILPNVPHSFTNH.

This sequence belongs to the non-heme iron-dependent dioxygenase family. As to quaternary structure, homotrimer. It depends on Fe(2+) as a cofactor.

The enzyme catalyses (S)-2-hydroxypropylphosphonate + H2O2 = (1R,2S)-epoxypropylphosphonate + 2 H2O. It functions in the pathway antibiotic biosynthesis; fosfomycin biosynthesis. Non-heme-dependent dioxygenase that catalyzes the oxidative epoxidation of (S)-2-hydroxypropylphosphonate into (1R,2S)-epoxypropylphosphonate, the final step in the biosynthesis of fosfomycin antibiotic. This chain is (S)-2-hydroxypropylphosphonic acid epoxidase (hppE), found in Pseudomonas syringae.